Reading from the N-terminus, the 246-residue chain is Ribonuclease PH (246 aa).

Residues Arg91 and 129 to 131 (GTR) contribute to the phosphate site.

It belongs to the RNase PH family. In terms of assembly, homohexameric ring arranged as a trimer of dimers.

It carries out the reaction tRNA(n+1) + phosphate = tRNA(n) + a ribonucleoside 5'-diphosphate. Phosphorolytic 3'-5' exoribonuclease that plays an important role in tRNA 3'-end maturation. Removes nucleotide residues following the 3'-CCA terminus of tRNAs; can also add nucleotides to the ends of RNA molecules by using nucleoside diphosphates as substrates, but this may not be physiologically important. Probably plays a role in initiation of 16S rRNA degradation (leading to ribosome degradation) during starvation. This is Ribonuclease PH from Paraburkholderia phytofirmans (strain DSM 17436 / LMG 22146 / PsJN) (Burkholderia phytofirmans).